A 274-amino-acid chain; its full sequence is MRSNNNNPLTRDEILSRYFPQYRPAVAASQGLSGGSCIIAHDTHRIVLRRHHDPDAPPAHFLRHHRALSQLPASLAPRALFYTPGWMAVEYLHGVVNSALPDADELAALLYHLHQQPRFGWRIALSPLLAQYWSCCDPARRTPFWLRRLKQLQKNGEPRPLRLAPLHMDVHGDNIVLTSAGLRLIDWEYAGDGDIALELAAVWVEDERQHRQLADAYAARARIDARQLWRQIRLWHPWVIMLKAGWFEYRWRQTGEQQFIRLADETWRQLRMKG.

This sequence belongs to the thiamine kinase family.

It carries out the reaction thiamine + ATP = thiamine phosphate + ADP + H(+). The protein operates within cofactor biosynthesis; thiamine diphosphate biosynthesis; thiamine phosphate from thiamine: step 1/1. Catalyzes the ATP-dependent phosphorylation of thiamine to thiamine phosphate. Is involved in thiamine salvage. The polypeptide is Thiamine kinase (Salmonella typhi).